The primary structure comprises 862 residues: Taxadiene synthase (862 aa).

D613, D617, N757, T761, and E765 together coordinate Mg(2+). The DDXXD motif motif lies at 613–617; sequence DDMAD.

The protein belongs to the terpene synthase family. Mg(2+) is required as a cofactor.

It carries out the reaction (2E,6E,10E)-geranylgeranyl diphosphate = taxa-4(5),11(12)-diene + diphosphate. The protein operates within alkaloid biosynthesis; taxol biosynthesis; taxa-4(20),11-dien-5alpha-ol from geranylgeranyl diphosphate: step 1/2. Catalyzes the cyclization of the ubiquitous isoprenoid intermediate geranylgeranyl diphosphate to taxa-4,11-diene, the parent olefin with a taxane skeleton. In Taxus brevifolia (Pacific yew), this protein is Taxadiene synthase (TDC1).